Reading from the N-terminus, the 567-residue chain is Phosphoglucomutase-like protein 5 (567 aa).

The disordered stretch occupies residues 1–26 (MEGSPIPVLTVPTAPYEDQRPTGGGG). Phosphothreonine is present on threonine 120. Phosphoserine is present on serine 122.

It belongs to the phosphohexose mutase family. As to quaternary structure, interacts with DMD/dystrophin; the interaction is direct. Interacts with UTRN/utrophin.

It localises to the cell junction. The protein localises to the adherens junction. Its subcellular location is the cytoplasm. It is found in the cytoskeleton. The protein resides in the cell membrane. It localises to the sarcolemma. Functionally, component of adherens-type cell-cell and cell-matrix junctions. Has no phosphoglucomutase activity in vitro. The chain is Phosphoglucomutase-like protein 5 from Rattus norvegicus (Rat).